A 642-amino-acid chain; its full sequence is Zinc finger protein 14 (642 aa).

The 73-residue stretch at 4–76 folds into the KRAB domain; the sequence is VSFEDVAVNF…MVERLCESRR (73 aa). A C2H2-type 1 zinc finger spans residues 103–125; that stretch reads HECSFCGRDFIHHSSLNRHMRSH. The C2H2-type 2; degenerate zinc finger occupies 141–163; sequence CKCKAVGKTFSYHHCFRKHERTH. Residues 169 to 191 form a C2H2-type 3 zinc finger; it reads YECKQCGKAFIYYQPFQRHERTH. The segment at 197–217 adopts a C2H2-type 4; atypical zinc-finger fold; the sequence is YECKQCGKTFIYYQSFQKHAH. 15 consecutive C2H2-type zinc fingers follow at residues 223–245, 251–273, 279–301, 307–329, 335–357, 363–385, 391–413, 419–441, 447–469, 475–497, 503–525, 531–553, 559–581, 587–609, and 615–637; these read YECK…KRTH, YECK…ERTH, YKCK…KRTH, YECK…VIIH, YKCK…ERTH, YECK…ETTH, YECK…ERSH, YECK…EKIH, FECK…ERTH, YQCK…ERTH, and YRCK…ERSH.

Belongs to the krueppel C2H2-type zinc-finger protein family.

The protein resides in the nucleus. In terms of biological role, may be involved in transcriptional regulation. The sequence is that of Zinc finger protein 14 (ZNF14) from Homo sapiens (Human).